The sequence spans 218 residues: Thiamine-phosphate synthase (218 aa).

4-amino-2-methyl-5-(diphosphooxymethyl)pyrimidine contacts are provided by residues glutamine 36 to lysine 40 and aspartate 70. 2 residues coordinate Mg(2+): aspartate 71 and aspartate 94. Threonine 113 provides a ligand contact to 4-amino-2-methyl-5-(diphosphooxymethyl)pyrimidine. Threonine 141–threonine 143 is a binding site for 2-[(2R,5Z)-2-carboxy-4-methylthiazol-5(2H)-ylidene]ethyl phosphate. Position 144 (lysine 144) interacts with 4-amino-2-methyl-5-(diphosphooxymethyl)pyrimidine.

It belongs to the thiamine-phosphate synthase family. It depends on Mg(2+) as a cofactor.

It carries out the reaction 2-[(2R,5Z)-2-carboxy-4-methylthiazol-5(2H)-ylidene]ethyl phosphate + 4-amino-2-methyl-5-(diphosphooxymethyl)pyrimidine + 2 H(+) = thiamine phosphate + CO2 + diphosphate. It catalyses the reaction 2-(2-carboxy-4-methylthiazol-5-yl)ethyl phosphate + 4-amino-2-methyl-5-(diphosphooxymethyl)pyrimidine + 2 H(+) = thiamine phosphate + CO2 + diphosphate. The catalysed reaction is 4-methyl-5-(2-phosphooxyethyl)-thiazole + 4-amino-2-methyl-5-(diphosphooxymethyl)pyrimidine + H(+) = thiamine phosphate + diphosphate. It functions in the pathway cofactor biosynthesis; thiamine diphosphate biosynthesis; thiamine phosphate from 4-amino-2-methyl-5-diphosphomethylpyrimidine and 4-methyl-5-(2-phosphoethyl)-thiazole: step 1/1. Condenses 4-methyl-5-(beta-hydroxyethyl)thiazole monophosphate (THZ-P) and 2-methyl-4-amino-5-hydroxymethyl pyrimidine pyrophosphate (HMP-PP) to form thiamine monophosphate (TMP). This Corynebacterium jeikeium (strain K411) protein is Thiamine-phosphate synthase.